Reading from the N-terminus, the 186-residue chain is Der GTPase-activating protein YihI (186 aa).

The tract at residues 42–77 (KAREDKKKRKHKGLASGSRHSAVEEKANKLQNEIKD) is disordered. Over residues 62-77 (SAVEEKANKLQNEIKD) the composition is skewed to basic and acidic residues.

It belongs to the YihI family. Interacts with Der.

Its function is as follows. A GTPase-activating protein (GAP) that modifies Der/EngA GTPase function. May play a role in ribosome biogenesis. This chain is Der GTPase-activating protein YihI, found in Haemophilus influenzae (strain ATCC 51907 / DSM 11121 / KW20 / Rd).